The following is a 253-amino-acid chain: Ethylene-responsive transcription factor RAP2-11 (253 aa).

Positions 21–78 (KFVGVRQRPSGKWVAEIKDTTQKIRMWLGTFETAEEAARAYDEAACLLRGSNTRTNFA) form a DNA-binding region, AP2/ERF.

It belongs to the AP2/ERF transcription factor family. ERF subfamily.

It localises to the nucleus. Functionally, probably acts as a transcriptional activator. Binds to the GCC-box pathogenesis-related promoter element. May be involved in the regulation of gene expression by stress factors and by components of stress signal transduction pathways. In Arabidopsis thaliana (Mouse-ear cress), this protein is Ethylene-responsive transcription factor RAP2-11 (RAP2-11).